A 240-amino-acid chain; its full sequence is Triosephosphate isomerase (240 aa).

9 to 11 (NWK) serves as a coordination point for substrate. The Electrophile role is filled by histidine 94. The active-site Proton acceptor is the glutamate 163. Substrate contacts are provided by residues glycine 169, serine 202, and 223 to 224 (GG).

This sequence belongs to the triosephosphate isomerase family. Homodimer.

It localises to the cytoplasm. The enzyme catalyses D-glyceraldehyde 3-phosphate = dihydroxyacetone phosphate. Its pathway is carbohydrate biosynthesis; gluconeogenesis. It functions in the pathway carbohydrate degradation; glycolysis; D-glyceraldehyde 3-phosphate from glycerone phosphate: step 1/1. Its function is as follows. Involved in the gluconeogenesis. Catalyzes stereospecifically the conversion of dihydroxyacetone phosphate (DHAP) to D-glyceraldehyde-3-phosphate (G3P). The sequence is that of Triosephosphate isomerase from Gloeobacter violaceus (strain ATCC 29082 / PCC 7421).